A 451-amino-acid polypeptide reads, in one-letter code: Ribulose bisphosphate carboxylase large chain (451 aa).

Lys-5 bears the N6,N6,N6-trimethyllysine mark. Substrate is bound by residues Asn-114 and Thr-164. Lys-166 serves as the catalytic Proton acceptor. Lys-168 is a substrate binding site. Mg(2+)-binding residues include Lys-192, Asp-194, and Glu-195. Position 192 is an N6-carboxylysine (Lys-192). The active-site Proton acceptor is His-285. Substrate contacts are provided by Arg-286, His-318, and Ser-370.

It belongs to the RuBisCO large chain family. Type I subfamily. As to quaternary structure, heterohexadecamer of 8 large chains and 8 small chains; disulfide-linked. The disulfide link is formed within the large subunit homodimers. It depends on Mg(2+) as a cofactor. In terms of processing, the disulfide bond which can form in the large chain dimeric partners within the hexadecamer appears to be associated with oxidative stress and protein turnover.

Its subcellular location is the plastid. The protein resides in the chloroplast. The enzyme catalyses 2 (2R)-3-phosphoglycerate + 2 H(+) = D-ribulose 1,5-bisphosphate + CO2 + H2O. The catalysed reaction is D-ribulose 1,5-bisphosphate + O2 = 2-phosphoglycolate + (2R)-3-phosphoglycerate + 2 H(+). RuBisCO catalyzes two reactions: the carboxylation of D-ribulose 1,5-bisphosphate, the primary event in carbon dioxide fixation, as well as the oxidative fragmentation of the pentose substrate in the photorespiration process. Both reactions occur simultaneously and in competition at the same active site. The protein is Ribulose bisphosphate carboxylase large chain of Aristea glauca.